We begin with the raw amino-acid sequence, 329 residues long: ATP-dependent (S)-NAD(P)H-hydrate dehydratase (329 aa).

Residues 1–28 (MALGPGCRAVRGCRPVLKRAFSLHKAHS) constitute a mitochondrion transit peptide. The 292-residue stretch at 35–326 (ILQLVRSVVP…AEVGPAFRRL (292 aa)) folds into the YjeF C-terminal domain. Lysine 49 bears the N6-acetyllysine mark. Tyrosine 67 carries the phosphotyrosine modification. (6S)-NADPHX-binding positions include glycine 135 and 188–194 (NHVEFGR). ATP contacts are provided by residues 228–232 (KGEQD) and 247–256 (GSGRRCGGQG). Aspartate 257 serves as a coordination point for (6S)-NADPHX.

Belongs to the NnrD/CARKD family. The cofactor is Mg(2+).

Its subcellular location is the mitochondrion. It catalyses the reaction (6S)-NADHX + ATP = ADP + phosphate + NADH + H(+). It carries out the reaction (6S)-NADPHX + ATP = ADP + phosphate + NADPH + H(+). Functionally, catalyzes the dehydration of the S-form of NAD(P)HX at the expense of ATP, which is converted to ADP. Together with NAD(P)HX epimerase, which catalyzes the epimerization of the S- and R-forms, the enzyme allows the repair of both epimers of NAD(P)HX, a damaged form of NAD(P)H that is a result of enzymatic or heat-dependent hydration. In Bos taurus (Bovine), this protein is ATP-dependent (S)-NAD(P)H-hydrate dehydratase.